The sequence spans 34 residues: U2-theraphotoxin-Bs1a (34 aa).

3 disulfides stabilise this stretch: C2–C16, C9–C21, and C15–C28.

As to expression, expressed by the venom gland.

It localises to the secreted. The protein is U2-theraphotoxin-Bs1a of Brachypelma smithi (Mexican red knee tarantula).